A 160-amino-acid chain; its full sequence is H/ACA ribonucleoprotein complex subunit 2-like protein (160 aa).

Belongs to the eukaryotic ribosomal protein eL8 family. In terms of assembly, component of the small nucleolar ribonucleoprotein particle containing H/ACA-type snoRNAs (H/ACA snoRNPs).

It localises to the nucleus. The protein localises to the nucleolus. Functionally, required for ribosome biogenesis. Part of a complex which catalyzes pseudouridylation of rRNA. This involves the isomerization of uridine such that the ribose is subsequently attached to C5, instead of the normal N1. Pseudouridine ('psi') residues may serve to stabilize the conformation of rRNAs. This Drosophila yakuba (Fruit fly) protein is H/ACA ribonucleoprotein complex subunit 2-like protein (NHP2).